The chain runs to 554 residues: Exodeoxyribonuclease 7 large subunit (554 aa).

Belongs to the XseA family. In terms of assembly, heterooligomer composed of large and small subunits.

Its subcellular location is the cytoplasm. It catalyses the reaction Exonucleolytic cleavage in either 5'- to 3'- or 3'- to 5'-direction to yield nucleoside 5'-phosphates.. In terms of biological role, bidirectionally degrades single-stranded DNA into large acid-insoluble oligonucleotides, which are then degraded further into small acid-soluble oligonucleotides. The sequence is that of Exodeoxyribonuclease 7 large subunit from Chlamydia pneumoniae (Chlamydophila pneumoniae).